The sequence spans 612 residues: Probable methyltransferase PMT9 (612 aa).

Over 1–14 (MKHFRTERVRATPK) the chain is Cytoplasmic. Residues 15 to 35 (LFTYVLVGFIALLGLTCLYYG) traverse the membrane as a helical; Signal-anchor for type II membrane protein segment. The Lumenal segment spans residues 36 to 612 (SSFAPGSRKS…LWSLPAISVS (577 aa)). Residues Asn-107, Asn-383, and Asn-562 are each glycosylated (N-linked (GlcNAc...) asparagine).

This sequence belongs to the methyltransferase superfamily.

It is found in the golgi apparatus membrane. The protein is Probable methyltransferase PMT9 of Arabidopsis thaliana (Mouse-ear cress).